The chain runs to 253 residues: Imidazole glycerol phosphate synthase subunit HisF (253 aa).

Catalysis depends on residues Asp-11 and Asp-130.

Belongs to the HisA/HisF family. As to quaternary structure, heterodimer of HisH and HisF.

It localises to the cytoplasm. It catalyses the reaction 5-[(5-phospho-1-deoxy-D-ribulos-1-ylimino)methylamino]-1-(5-phospho-beta-D-ribosyl)imidazole-4-carboxamide + L-glutamine = D-erythro-1-(imidazol-4-yl)glycerol 3-phosphate + 5-amino-1-(5-phospho-beta-D-ribosyl)imidazole-4-carboxamide + L-glutamate + H(+). It participates in amino-acid biosynthesis; L-histidine biosynthesis; L-histidine from 5-phospho-alpha-D-ribose 1-diphosphate: step 5/9. IGPS catalyzes the conversion of PRFAR and glutamine to IGP, AICAR and glutamate. The HisF subunit catalyzes the cyclization activity that produces IGP and AICAR from PRFAR using the ammonia provided by the HisH subunit. The sequence is that of Imidazole glycerol phosphate synthase subunit HisF from Acidobacterium capsulatum (strain ATCC 51196 / DSM 11244 / BCRC 80197 / JCM 7670 / NBRC 15755 / NCIMB 13165 / 161).